A 352-amino-acid polypeptide reads, in one-letter code: Photosystem II protein D1 (352 aa).

An N-acetylthreonine modification is found at threonine 2. Residue threonine 2 is modified to Phosphothreonine. 3 consecutive transmembrane segments (helical) span residues 29-46 (YIGW…TATS), 118-133 (HFFL…EWEL), and 142-156 (WIAV…AATA). Histidine 118 is a chlorophyll a binding site. A pheophytin a-binding site is contributed by tyrosine 126. Residues aspartate 170 and glutamate 189 each contribute to the [CaMn4O5] cluster site. A helical membrane pass occupies residues 197–218 (FHMLGVAGVFGGSLFSAMHGSL). Residue histidine 198 coordinates chlorophyll a. A quinone-binding positions include histidine 215 and 264-265 (SF). Residue histidine 215 coordinates Fe cation. A Fe cation-binding site is contributed by histidine 272. Residues 274 to 288 (FLAAWPVVGIWFTAL) form a helical membrane-spanning segment. Residues histidine 332, glutamate 333, aspartate 342, and alanine 344 each coordinate [CaMn4O5] cluster. Positions 345-352 (SVEAPSIA) are excised as a propeptide.

The protein belongs to the reaction center PufL/M/PsbA/D family. PSII is composed of 1 copy each of membrane proteins PsbA, PsbB, PsbC, PsbD, PsbE, PsbF, PsbH, PsbI, PsbJ, PsbK, PsbL, PsbM, PsbT, PsbX, PsbY, PsbZ, Psb30/Ycf12, at least 3 peripheral proteins of the oxygen-evolving complex and a large number of cofactors. It forms dimeric complexes. Requires The D1/D2 heterodimer binds P680, chlorophylls that are the primary electron donor of PSII, and subsequent electron acceptors. It shares a non-heme iron and each subunit binds pheophytin, quinone, additional chlorophylls, carotenoids and lipids. D1 provides most of the ligands for the Mn4-Ca-O5 cluster of the oxygen-evolving complex (OEC). There is also a Cl(-1) ion associated with D1 and D2, which is required for oxygen evolution. The PSII complex binds additional chlorophylls, carotenoids and specific lipids. as cofactor. In terms of processing, tyr-161 forms a radical intermediate that is referred to as redox-active TyrZ, YZ or Y-Z. Post-translationally, C-terminally processed by CTPA; processing is essential to allow assembly of the oxygen-evolving complex and thus photosynthetic growth.

It localises to the plastid. The protein resides in the chloroplast thylakoid membrane. It catalyses the reaction 2 a plastoquinone + 4 hnu + 2 H2O = 2 a plastoquinol + O2. Functionally, photosystem II (PSII) is a light-driven water:plastoquinone oxidoreductase that uses light energy to abstract electrons from H(2)O, generating O(2) and a proton gradient subsequently used for ATP formation. It consists of a core antenna complex that captures photons, and an electron transfer chain that converts photonic excitation into a charge separation. The D1/D2 (PsbA/PsbD) reaction center heterodimer binds P680, the primary electron donor of PSII as well as several subsequent electron acceptors. The polypeptide is Photosystem II protein D1 (Chlorella ellipsoidea).